A 569-amino-acid chain; its full sequence is Urease subunit alpha (569 aa).

Residues 131-569 (GGIDTHIHFI…LPMAQRYFLL (439 aa)) form the Urease domain. His136, His138, and Lys219 together coordinate Ni(2+). At Lys219 the chain carries N6-carboxylysine. His221 lines the substrate pocket. Ni(2+) is bound by residues His248 and His274. His322 functions as the Proton donor in the catalytic mechanism. Asp362 lines the Ni(2+) pocket.

Belongs to the metallo-dependent hydrolases superfamily. Urease alpha subunit family. As to quaternary structure, heterotrimer of UreA (gamma), UreB (beta) and UreC (alpha) subunits. Three heterotrimers associate to form the active enzyme. Ni cation serves as cofactor. Post-translationally, carboxylation allows a single lysine to coordinate two nickel ions.

The protein resides in the cytoplasm. It catalyses the reaction urea + 2 H2O + H(+) = hydrogencarbonate + 2 NH4(+). Its pathway is nitrogen metabolism; urea degradation; CO(2) and NH(3) from urea (urease route): step 1/1. The sequence is that of Urease subunit alpha from Synechococcus sp. (strain RCC307).